We begin with the raw amino-acid sequence, 437 residues long: MSRLDDIPSSPGKFKMEKSSYLHRLRFQSSLTKFAFFSFFLLCLISLLFLRSPPSINPSSPSDPSRRSLRTNTYGGPAWEKRLRSSARIRTSTNNGITVLVTGAAGFVGTHVSAALKRRGDGVIGLDNFNDYYDPSLKRARRALLERSGIFIVEGDINDVELLRKLFKIVSFTHVMHLAAQAGVRYAMENPSSYVHSNIAGFVNLLEICKSVNPQPAIVWASSSSVYGLNTKVPFSEKDKTDQPASLYAATKKAGEEIAHTYNHIYGLSLTGLRFFTVYGPWGRPDMAYFFFTKDILKGKSISIFESANHGTVARDFTYIDDIVKGCLAALDTAEKSTGSGGKKRGPAQLRVFNLGNTSPVPVSDLVRILERQLKVKAKKNLIKMPRNGDVPFTHANISLAQRELGYKPTTDLQTGLKKFVRWYLSYYSGDKKAAAR.

A helical transmembrane segment spans residues 30–50 (SLTKFAFFSFFLLCLISLLFL). A disordered region spans residues 56–76 (INPSSPSDPSRRSLRTNTYGG). Residues 96-116 (GITVLVTGAAGFVGTHVSAAL) form a helical membrane-spanning segment. 98–129 (TVLVTGAAGFVGTHVSAALKRRGDGVIGLDNF) provides a ligand contact to NAD(+). Y248 (proton acceptor) is an active-site residue.

Belongs to the NAD(P)-dependent epimerase/dehydratase family. In terms of assembly, homodimer. As to expression, in roots, leaves, siliques, flowers, pollen and stems.

The protein resides in the golgi apparatus. Its subcellular location is the golgi stack membrane. The enzyme catalyses UDP-alpha-D-glucuronate = UDP-alpha-D-galacturonate. Its activity is regulated as follows. Activated by glycerol, not effected by dimethyl sulfoxide and inhibited by high concentration of monovalent salts, UDP-xylose, UDP-arabinose or UDP. Involved in the synthesis of the negatively charged monosaccharide that forms the backbone of pectic cell wall components. This Arabidopsis thaliana (Mouse-ear cress) protein is UDP-glucuronate 4-epimerase 4 (GAE4).